The chain runs to 427 residues: Adenylosuccinate synthetase (427 aa).

GTP-binding positions include 12–18 and 40–42; these read GDEGKGK and GHT. The active-site Proton acceptor is the Asp-13. The Mg(2+) site is built by Asp-13 and Gly-40. Residues 13–16, 38–41, Thr-128, Arg-142, Gln-223, Thr-238, and Arg-302 contribute to the IMP site; these read DEGK and NAGH. The active-site Proton donor is His-41. 298–304 contacts substrate; the sequence is TTTGRPR. Residues Arg-304, 330–332, and 412–414 contribute to the GTP site; these read KLD and SVG.

This sequence belongs to the adenylosuccinate synthetase family. As to quaternary structure, homodimer. It depends on Mg(2+) as a cofactor.

It is found in the cytoplasm. The enzyme catalyses IMP + L-aspartate + GTP = N(6)-(1,2-dicarboxyethyl)-AMP + GDP + phosphate + 2 H(+). Its pathway is purine metabolism; AMP biosynthesis via de novo pathway; AMP from IMP: step 1/2. Plays an important role in the de novo pathway of purine nucleotide biosynthesis. Catalyzes the first committed step in the biosynthesis of AMP from IMP. This chain is Adenylosuccinate synthetase, found in Carboxydothermus hydrogenoformans (strain ATCC BAA-161 / DSM 6008 / Z-2901).